A 109-amino-acid polypeptide reads, in one-letter code: Nucleoid-associated protein ETA_24730 (109 aa).

It belongs to the YbaB/EbfC family. Homodimer.

Its subcellular location is the cytoplasm. The protein resides in the nucleoid. Functionally, binds to DNA and alters its conformation. May be involved in regulation of gene expression, nucleoid organization and DNA protection. This chain is Nucleoid-associated protein ETA_24730, found in Erwinia tasmaniensis (strain DSM 17950 / CFBP 7177 / CIP 109463 / NCPPB 4357 / Et1/99).